Reading from the N-terminus, the 131-residue chain is Small ribosomal subunit protein uS11 (131 aa).

The protein belongs to the universal ribosomal protein uS11 family. As to quaternary structure, part of the 30S ribosomal subunit. Interacts with proteins S7 and S18. Binds to IF-3.

Its function is as follows. Located on the platform of the 30S subunit, it bridges several disparate RNA helices of the 16S rRNA. Forms part of the Shine-Dalgarno cleft in the 70S ribosome. The chain is Small ribosomal subunit protein uS11 from Cellvibrio japonicus (strain Ueda107) (Pseudomonas fluorescens subsp. cellulosa).